Here is a 199-residue protein sequence, read N- to C-terminus: Peroxiredoxin 2 (199 aa).

One can recognise a Thioredoxin domain in the interval Met-1–Phe-152. The Cysteine sulfenic acid (-SOH) intermediate role is filled by Cys-40. Arg-115 is a substrate binding site.

The protein belongs to the peroxiredoxin family. Prx6 subfamily. As to quaternary structure, homodecamer. Pentamer of dimers that assemble into a ring structure.

Its subcellular location is the cytoplasm. The enzyme catalyses a hydroperoxide + [thioredoxin]-dithiol = an alcohol + [thioredoxin]-disulfide + H2O. Its function is as follows. Thiol-specific peroxidase that catalyzes the reduction of hydrogen peroxide and organic hydroperoxides to water and alcohols, respectively. Plays a role in cell protection against oxidative stress by detoxifying peroxides. In Thermoplasma acidophilum (strain ATCC 25905 / DSM 1728 / JCM 9062 / NBRC 15155 / AMRC-C165), this protein is Peroxiredoxin 2.